Reading from the N-terminus, the 226-residue chain is ATP synthase F(0) complex subunit a (226 aa).

Helical transmembrane passes span 10–30 (ITPT…PPVI), 68–88 (WSLM…LGLL), 97–117 (QLSM…ILGF), 138–158 (IPML…ALAV), 164–184 (ITAG…LTSI), and 189–209 (AMIT…VALI).

This sequence belongs to the ATPase A chain family. Component of the ATP synthase complex composed at least of ATP5F1A/subunit alpha, ATP5F1B/subunit beta, ATP5MC1/subunit c (homooctomer), MT-ATP6/subunit a, MT-ATP8/subunit 8, ATP5ME/subunit e, ATP5MF/subunit f, ATP5MG/subunit g, ATP5MK/subunit k, ATP5MJ/subunit j, ATP5F1C/subunit gamma, ATP5F1D/subunit delta, ATP5F1E/subunit epsilon, ATP5PF/subunit F6, ATP5PB/subunit b, ATP5PD/subunit d, ATP5PO/subunit OSCP. ATP synthase complex consists of a soluble F(1) head domain (subunits alpha(3) and beta(3)) - the catalytic core - and a membrane F(0) domain - the membrane proton channel (subunits c, a, 8, e, f, g, k and j). These two domains are linked by a central stalk (subunits gamma, delta, and epsilon) rotating inside the F1 region and a stationary peripheral stalk (subunits F6, b, d, and OSCP). Interacts with DNAJC30; interaction is direct.

Its subcellular location is the mitochondrion inner membrane. The catalysed reaction is H(+)(in) = H(+)(out). Its function is as follows. Subunit a, of the mitochondrial membrane ATP synthase complex (F(1)F(0) ATP synthase or Complex V) that produces ATP from ADP in the presence of a proton gradient across the membrane which is generated by electron transport complexes of the respiratory chain. ATP synthase complex consist of a soluble F(1) head domain - the catalytic core - and a membrane F(1) domain - the membrane proton channel. These two domains are linked by a central stalk rotating inside the F(1) region and a stationary peripheral stalk. During catalysis, ATP synthesis in the catalytic domain of F(1) is coupled via a rotary mechanism of the central stalk subunits to proton translocation. With the subunit c (ATP5MC1), forms the proton-conducting channel in the F(0) domain, that contains two crucial half-channels (inlet and outlet) that facilitate proton movement from the mitochondrial intermembrane space (IMS) into the matrix. Protons are taken up via the inlet half-channel and released through the outlet half-channel, following a Grotthuss mechanism. The chain is ATP synthase F(0) complex subunit a from Cricetulus griseus (Chinese hamster).